We begin with the raw amino-acid sequence, 232 residues long: Phosphatidylserine decarboxylase proenzyme (232 aa).

Ser190 serves as the catalytic Schiff-base intermediate with substrate; via pyruvic acid. At Ser190 the chain carries Pyruvic acid (Ser); by autocatalysis.

Belongs to the phosphatidylserine decarboxylase family. PSD-A subfamily. Heterodimer of a large membrane-associated beta subunit and a small pyruvoyl-containing alpha subunit. Pyruvate serves as cofactor. Post-translationally, is synthesized initially as an inactive proenzyme. Formation of the active enzyme involves a self-maturation process in which the active site pyruvoyl group is generated from an internal serine residue via an autocatalytic post-translational modification. Two non-identical subunits are generated from the proenzyme in this reaction, and the pyruvate is formed at the N-terminus of the alpha chain, which is derived from the carboxyl end of the proenzyme. The post-translation cleavage follows an unusual pathway, termed non-hydrolytic serinolysis, in which the side chain hydroxyl group of the serine supplies its oxygen atom to form the C-terminus of the beta chain, while the remainder of the serine residue undergoes an oxidative deamination to produce ammonia and the pyruvoyl prosthetic group on the alpha chain.

The protein localises to the cell membrane. It catalyses the reaction a 1,2-diacyl-sn-glycero-3-phospho-L-serine + H(+) = a 1,2-diacyl-sn-glycero-3-phosphoethanolamine + CO2. The protein operates within phospholipid metabolism; phosphatidylethanolamine biosynthesis; phosphatidylethanolamine from CDP-diacylglycerol: step 2/2. Its function is as follows. Catalyzes the formation of phosphatidylethanolamine (PtdEtn) from phosphatidylserine (PtdSer). The sequence is that of Phosphatidylserine decarboxylase proenzyme from Agrobacterium fabrum (strain C58 / ATCC 33970) (Agrobacterium tumefaciens (strain C58)).